Here is a 104-residue protein sequence, read N- to C-terminus: Protein ORF3 (104 aa).

Residues 1–35 (MVTIPPLVSRWFPVCGFRVCKISSPFAFTTPRWPH) carry the Nuclear export signal motif. The tract at residues 78–104 (PALQQGTHSSRQVTPLSLRSRSSTFNK) is disordered.

In terms of assembly, interacts with host RGS16.

Its subcellular location is the host cytoplasm. It localises to the host nucleus. Plays a role in modulating host cell signaling by binding to and degrading host RGS16. Not necessary for virus replication. The polypeptide is Protein ORF3 (Sus scrofa (Pig)).